The primary structure comprises 151 residues: uncharacterized protein (151 aa).

It to M.jannaschii MJ1244 and MJ1245.

This is an uncharacterized protein from Methanothermobacter thermautotrophicus (strain ATCC 29096 / DSM 1053 / JCM 10044 / NBRC 100330 / Delta H) (Methanobacterium thermoautotrophicum).